Here is an 818-residue protein sequence, read N- to C-terminus: Hillarin (818 aa).

In terms of domain architecture, LIM zinc-binding spans 9–76 (STCLRCSETV…SSHVPKSGPG (68 aa)). Residues 97-141 (FVNEQIRGTRSEVDGGPLGGSRQSTPNGYGSREISSPSQNDSDYK) form a disordered region. The segment covering 117–137 (SRQSTPNGYGSREISSPSQND) has biased composition (polar residues). A coiled-coil region spans residues 216 to 272 (QDEWERELQRLTHKFEKELATSRRSRDEANILTMRHEQQKEDLEKNMTLRRSKKKES).

This sequence belongs to the transglutaminase-like superfamily. In terms of assembly, interacts with pnut. Localizes to the neuropil of the embryonic central nervous system (at protein level). Also detected in third instar larval brain (at protein level).

It localises to the cytoplasm. The protein localises to the cell cortex. Its subcellular location is the cleavage furrow. Functionally, may act as a modulator of septin function during cytokinesis in the developing nervous system. In Drosophila melanogaster (Fruit fly), this protein is Hillarin.